We begin with the raw amino-acid sequence, 369 residues long: Molybdenum import ATP-binding protein ModC 1 (369 aa).

The 231-residue stretch at 10–240 (KGYIEVAFNG…PALASRSEAA (231 aa)) folds into the ABC transporter domain. 42–49 (GPPGCGKT) contacts ATP. One can recognise a Mop domain in the interval 297 to 367 (ASSILNVFRA…ELCGKLGDDG (71 aa)).

The protein belongs to the ABC transporter superfamily. Molybdate importer (TC 3.A.1.8) family. As to quaternary structure, the complex is composed of two ATP-binding proteins (ModC), two transmembrane proteins (ModB) and a solute-binding protein (ModA).

Its subcellular location is the cell inner membrane. The enzyme catalyses molybdate(out) + ATP + H2O = molybdate(in) + ADP + phosphate + H(+). In terms of biological role, part of the ABC transporter complex ModABC involved in molybdenum import. Responsible for energy coupling to the transport system. The polypeptide is Molybdenum import ATP-binding protein ModC 1 (Bradyrhizobium diazoefficiens (strain JCM 10833 / BCRC 13528 / IAM 13628 / NBRC 14792 / USDA 110)).